An 869-amino-acid polypeptide reads, in one-letter code: Bifunctional uridylyltransferase/uridylyl-removing enzyme (869 aa).

Residues 1–332 (MTDAPAERPD…QFDGEATPES (332 aa)) are uridylyltransferase. The segment at 333 to 691 (LGGGFSLRRG…RRAVPDNDAL (359 aa)) is uridylyl-removing. One can recognise an HD domain in the interval 450–572 (VDQHTLMVLR…VGTRERLDYL (123 aa)). 2 ACT domains span residues 692–774 (EVFV…RAVP) and 798–869 (RISL…LDPV).

This sequence belongs to the GlnD family. It depends on Mg(2+) as a cofactor.

The enzyme catalyses [protein-PII]-L-tyrosine + UTP = [protein-PII]-uridylyl-L-tyrosine + diphosphate. It carries out the reaction [protein-PII]-uridylyl-L-tyrosine + H2O = [protein-PII]-L-tyrosine + UMP + H(+). Its activity is regulated as follows. Uridylyltransferase (UTase) activity is inhibited by glutamine, while glutamine activates uridylyl-removing (UR) activity. Its function is as follows. Modifies, by uridylylation and deuridylylation, the PII regulatory proteins (GlnB and homologs), in response to the nitrogen status of the cell that GlnD senses through the glutamine level. Under low glutamine levels, catalyzes the conversion of the PII proteins and UTP to PII-UMP and PPi, while under higher glutamine levels, GlnD hydrolyzes PII-UMP to PII and UMP (deuridylylation). Thus, controls uridylylation state and activity of the PII proteins, and plays an important role in the regulation of nitrogen assimilation and metabolism. This Xanthomonas oryzae pv. oryzae (strain MAFF 311018) protein is Bifunctional uridylyltransferase/uridylyl-removing enzyme.